Reading from the N-terminus, the 350-residue chain is Inositol 2-dehydrogenase/D-chiro-inositol 3-dehydrogenase (350 aa).

Belongs to the Gfo/Idh/MocA family. Homotetramer.

It catalyses the reaction myo-inositol + NAD(+) = scyllo-inosose + NADH + H(+). It carries out the reaction 1D-chiro-inositol + NAD(+) = scyllo-inosine + NADH + H(+). The protein operates within polyol metabolism; myo-inositol degradation into acetyl-CoA; acetyl-CoA from myo-inositol: step 1/7. In terms of biological role, involved in the oxidation of myo-inositol (MI) and D-chiro-inositol (DCI) to 2-keto-myo-inositol (2KMI or 2-inosose) and 1-keto-D-chiro-inositol (1KDCI), respectively. This Lactiplantibacillus plantarum (strain ATCC BAA-793 / NCIMB 8826 / WCFS1) (Lactobacillus plantarum) protein is Inositol 2-dehydrogenase/D-chiro-inositol 3-dehydrogenase.